Consider the following 314-residue polypeptide: Protein nutcracker (314 aa).

Positions 1–62 (MSDTKSEIEG…PRLIQEKSTQ (62 aa)) are disordered. The span at 21–34 (QQQQQPQQQQNEQQ) shows a compositional bias: low complexity. The interval 257 to 314 (MQMEMKLQPSLLGLPDELYFEIFRYLDKSQLNVVARVNRHLHFYSKEVERKRLKGGRS) is required for interaction with skpA and Cul1, but not with PI31. The region spanning 264 to 309 (QPSLLGLPDELYFEIFRYLDKSQLNVVARVNRHLHFYSKEVERKRL) is the F-box domain.

As to quaternary structure, component of an SCF (SKP1-CUL1-F-box protein) E3 ubiquitin-protein ligase complex, at least composed of ntc, skpA and Cul1. Interacts (via F-box domain) with skpA and Cul1. Interacts with Prosalpha7 and PI31. Interacts with Bruce. Expressed in testis (at protein level).

The protein localises to the cytoplasm. Functionally, functions together with PI31 to control non-apoptotic caspase activation during sperm individualization. Positively regulates PI31 stability. The sequence is that of Protein nutcracker from Drosophila melanogaster (Fruit fly).